Consider the following 154-residue polypeptide: Myoglobin (154 aa).

The region spanning 2–148 is the Globin domain; it reads GLSDGEWQLV…FRKDMASNYK (147 aa). Phosphoserine is present on S4. H65 is a binding site for nitrite. H65 lines the O2 pocket. Residue T68 is modified to Phosphothreonine. H94 contacts heme b.

It belongs to the globin family. As to quaternary structure, monomeric.

The protein resides in the cytoplasm. Its subcellular location is the sarcoplasm. It carries out the reaction Fe(III)-heme b-[protein] + nitric oxide + H2O = Fe(II)-heme b-[protein] + nitrite + 2 H(+). The catalysed reaction is H2O2 + AH2 = A + 2 H2O. Monomeric heme protein which primary function is to store oxygen and facilitate its diffusion within muscle tissues. Reversibly binds oxygen through a pentacoordinated heme iron and enables its timely and efficient release as needed during periods of heightened demand. Depending on the oxidative conditions of tissues and cells, and in addition to its ability to bind oxygen, it also has a nitrite reductase activity whereby it regulates the production of bioactive nitric oxide. Under stress conditions, like hypoxia and anoxia, it also protects cells against reactive oxygen species thanks to its pseudoperoxidase activity. This is Myoglobin from Homo sapiens (Human).